We begin with the raw amino-acid sequence, 412 residues long: Putative competence-damage inducible protein (412 aa).

The protein belongs to the CinA family.

This is Putative competence-damage inducible protein from Bacillus cereus (strain G9842).